We begin with the raw amino-acid sequence, 547 residues long: Chaperonin GroEL (547 aa).

Residues 30–33, Lys-51, 87–91, Gly-415, 479–481, and Asp-495 each bind ATP; these read TLGP, DGTTT, and NAA.

It belongs to the chaperonin (HSP60) family. As to quaternary structure, forms a cylinder of 14 subunits composed of two heptameric rings stacked back-to-back. Interacts with the co-chaperonin GroES.

It is found in the cytoplasm. It carries out the reaction ATP + H2O + a folded polypeptide = ADP + phosphate + an unfolded polypeptide.. Functionally, together with its co-chaperonin GroES, plays an essential role in assisting protein folding. The GroEL-GroES system forms a nano-cage that allows encapsulation of the non-native substrate proteins and provides a physical environment optimized to promote and accelerate protein folding. This chain is Chaperonin GroEL, found in Marinomonas sp. (strain MWYL1).